A 183-amino-acid polypeptide reads, in one-letter code: Small ribosomal subunit protein uS4c (183 aa).

An S4 RNA-binding domain is found at 82 to 143 (MRLDNILFRL…KQRSKALIQN (62 aa)).

It belongs to the universal ribosomal protein uS4 family. In terms of assembly, part of the 30S ribosomal subunit. Contacts protein S5. The interaction surface between S4 and S5 is involved in control of translational fidelity.

The protein resides in the plastid. It is found in the chloroplast. Its function is as follows. One of the primary rRNA binding proteins, it binds directly to 16S rRNA where it nucleates assembly of the body of the 30S subunit. Functionally, with S5 and S12 plays an important role in translational accuracy. This is Small ribosomal subunit protein uS4c (rps4) from Sparaxis sp. (strain Lejeune 1997).